The primary structure comprises 342 residues: tRNA N6-adenosine threonylcarbamoyltransferase (342 aa).

2 residues coordinate Fe cation: His111 and His115. Substrate-binding positions include 134-138 (LVSGG), Asp167, Gly180, and Asn275. Fe cation is bound at residue Asp303.

It belongs to the KAE1 / TsaD family. Requires Fe(2+) as cofactor.

The protein localises to the cytoplasm. The enzyme catalyses L-threonylcarbamoyladenylate + adenosine(37) in tRNA = N(6)-L-threonylcarbamoyladenosine(37) in tRNA + AMP + H(+). Functionally, required for the formation of a threonylcarbamoyl group on adenosine at position 37 (t(6)A37) in tRNAs that read codons beginning with adenine. Is involved in the transfer of the threonylcarbamoyl moiety of threonylcarbamoyl-AMP (TC-AMP) to the N6 group of A37, together with TsaE and TsaB. TsaD likely plays a direct catalytic role in this reaction. This is tRNA N6-adenosine threonylcarbamoyltransferase from Paraburkholderia xenovorans (strain LB400).